Reading from the N-terminus, the 519-residue chain is MVFKAHHRSITRQDIELEDLENAPASIASIENDTLEANVGSTPLTAKQKRNIYFLILLYLIQGVPMGLVRGSIPYFLKPNVSYSDLATYSLAAYPYSLKVLWSPIVDTYYCRSFGRRKTWVVPCMLLISSTLLLFSYNVDTWISKGSSYINSFTTWSFLLVFVCATQDIAVDGWSLNMLNPEQLSYASTAQTVGLNTGFFLSFTILLVFTSPEFANTFIRSIPSNEGLITLSGYIKFWAYFTFIASVLVCFWDESNHQEIANISDMWKTIRAALSLKNMRQLLIVHTLGKVGFVANETLTLLKATEFGLSNEMLSLIILINFPLGLALGVYTGRISNYRPLDIWLKGYWGRVVSILLNTILVYMVSNWKHRFPVFFPIFLCYTLNASFSTIQFVALGVFHSKISDPHIGGTYMTILNTLSNLGGSWPQYVMLRMADLLTVSSCSTAPHLTCSADAQKKECQALGGTCLYKRDGYYLTSIVGIFLAISICVSLITPVVRRLTKAPISSWHIHSKIAETYT.

11 helical membrane-spanning segments follow: residues 52 to 72 (IYFL…VRGS), 86 to 106 (LATY…SPIV), 119 to 139 (TWVV…SYNV), 156 to 176 (WSFL…GWSL), 199 to 219 (FFLS…NTFI), 231 to 251 (LSGY…LVCF), 313 to 333 (MLSL…VYTG), 343 to 363 (IWLK…ILVY), 374 to 394 (VFFP…IQFV), 408 to 430 (IGGT…PQYV), and 477 to 497 (TSIV…TPVV).

It localises to the membrane. This is an uncharacterized protein from Schizosaccharomyces pombe (strain 972 / ATCC 24843) (Fission yeast).